The chain runs to 844 residues: RPA-related protein RADX (844 aa).

The OB DNA-binding region spans 228–331; it reads WHNRKNFPAL…LISTMEICLN (104 aa). 2 disordered regions span residues 571-609 and 626-664; these read PASE…RPMD and GPTA…TGKS. The segment covering 572–587 has biased composition (polar residues); it reads ASETLQNASPPSTSQA. Basic and acidic residues predominate over residues 590-608; that stretch reads KEGHYHERGSKRSQDDRPM. Positions 652–662 are enriched in polar residues; that stretch reads SRENSTANATG.

It localises to the chromosome. Its function is as follows. Single-stranded DNA-binding protein recruited to replication forks to maintain genome stability. Prevents fork collapse by antagonizing the accumulation of RAD51 at forks to ensure the proper balance of fork remodeling and protection without interfering with the capacity of cells to complete homologous recombination of double-strand breaks. The polypeptide is RPA-related protein RADX (Rattus norvegicus (Rat)).